The primary structure comprises 730 residues: Zinc finger protein 615 (730 aa).

The region spanning Leu-7 to Phe-78 is the KRAB domain. 19 consecutive C2H2-type zinc fingers follow at residues His-203–His-225, His-231–His-253, Tyr-259–His-281, Tyr-287–His-309, His-315–His-337, Tyr-343–His-365, Phe-371–His-393, Tyr-399–His-421, Tyr-427–His-449, Tyr-455–His-477, Tyr-483–His-505, Tyr-511–His-533, Tyr-539–His-561, Tyr-567–His-589, Tyr-595–His-617, Tyr-623–His-645, Phe-651–His-673, Tyr-679–His-701, and Tyr-707–His-729.

The protein belongs to the krueppel C2H2-type zinc-finger protein family.

The protein resides in the nucleus. In terms of biological role, may be involved in transcriptional regulation. The protein is Zinc finger protein 615 (ZNF615) of Pongo abelii (Sumatran orangutan).